Reading from the N-terminus, the 287-residue chain is ATP synthase gamma chain (287 aa).

Belongs to the ATPase gamma chain family. As to quaternary structure, F-type ATPases have 2 components, CF(1) - the catalytic core - and CF(0) - the membrane proton channel. CF(1) has five subunits: alpha(3), beta(3), gamma(1), delta(1), epsilon(1). CF(0) has three main subunits: a, b and c.

Its subcellular location is the cell inner membrane. Its function is as follows. Produces ATP from ADP in the presence of a proton gradient across the membrane. The gamma chain is believed to be important in regulating ATPase activity and the flow of protons through the CF(0) complex. The sequence is that of ATP synthase gamma chain from Methylococcus capsulatus (strain ATCC 33009 / NCIMB 11132 / Bath).